Consider the following 195-residue polypeptide: dTTP/UTP pyrophosphatase (195 aa).

Residue Asp70 is the Proton acceptor of the active site.

This sequence belongs to the Maf family. YhdE subfamily. Requires a divalent metal cation as cofactor.

It is found in the cytoplasm. It carries out the reaction dTTP + H2O = dTMP + diphosphate + H(+). The catalysed reaction is UTP + H2O = UMP + diphosphate + H(+). Its function is as follows. Nucleoside triphosphate pyrophosphatase that hydrolyzes dTTP and UTP. May have a dual role in cell division arrest and in preventing the incorporation of modified nucleotides into cellular nucleic acids. This Photorhabdus laumondii subsp. laumondii (strain DSM 15139 / CIP 105565 / TT01) (Photorhabdus luminescens subsp. laumondii) protein is dTTP/UTP pyrophosphatase.